Consider the following 706-residue polypeptide: Glutamine-dependent NAD(+) synthetase (706 aa).

In terms of domain architecture, CN hydrolase spans 5 to 275 (VTVATCALNQ…VEVLTATLDL (271 aa)). Catalysis depends on E45, which acts as the Proton acceptor; for glutaminase activity. The For glutaminase activity role is filled by K114. C175 functions as the Nucleophile; for glutaminase activity in the catalytic mechanism. The interval 325-706 (YHSPEEEISL…AAPQSLDGVD (382 aa)) is ligase. 355 to 362 (PLSGGVDS) contacts ATP. S357 is a catalytic residue.

In the C-terminal section; belongs to the NAD synthetase family. In terms of assembly, homohexamer.

The catalysed reaction is deamido-NAD(+) + L-glutamine + ATP + H2O = L-glutamate + AMP + diphosphate + NAD(+) + H(+). The protein operates within cofactor biosynthesis; NAD(+) biosynthesis; NAD(+) from deamido-NAD(+) (L-Gln route): step 1/1. In terms of biological role, catalyzes the final step of the nicotinamide adenine dinucleotide (NAD) de novo synthesis pathway, the ATP-dependent amidation of deamido-NAD using L-glutamine as a nitrogen source. This Macaca fascicularis (Crab-eating macaque) protein is Glutamine-dependent NAD(+) synthetase (NADSYN1).